The sequence spans 776 residues: MLARAERPRPGPRPPPVFPFPPPLSLLLLLAILSAPVCGRVPRSVPRTSLPISEADSYLTRFAASHTYNYSALLVDPASHTLYVGARDSIFALTLPFSGERPRRIDWMVPETHRQNCRKKGKKEDECHNFIQILAIVNASHLLTCGTFAFDPKCGVIDVSSFQQVERLESGRGKCPFEPAQRSAAVMAGGVLYTATVKNFLGTEPIISRAVGRAEDWIRTETLSSWLNAPAFVAAMVLSPAEWGDEDGDDEIFFFFTETSRVLDSYERIKVPRVARVCAGDLGGRKTLQQRWTTFLKADLLCPGPEHGRASGVLQAMAELRPQPGAGTPIFYGIFSSQWEGAAISAVCAFRPQDIRAVLNGPFRELKHDCNRGLPVMDNEVPQPRPGECIANNMKLQQFGSSLSLPDRVLTFIRDHPLMDRPVFPADGRPLLVTTDTAYLRVVAHRVTSLSGKEYDVLYLGTEDGHLHRAVRIGAQLSVLEDLALFPEPQPVESMKLYHDWLLVGSHTEVTQVNTSNCGRLQSCSECILAQDPVCAWSFRLDACVAHAGEHRGMVQDIESADVSSLCPKEPGEHPVVFEVPVATVGHVVLPCSPSSAWASCVWHQPSGVTALTPRRDGLEVVVTPGAMGAYACECQEGGAARVVAAYSLVWGSQRGPSNRAHTVVGAGLVGFLLGVLAASLTLLLIGRRQQRRRQRELLARDKVGLDLGAPPSGTTSYSQDPPSPSPEDERLPLALGKRGSGFGGFPPPFLLDSCPSPAHIRLTGAPLATCDETSI.

The N-terminal stretch at 1–39 (MLARAERPRPGPRPPPVFPFPPPLSLLLLLAILSAPVCG) is a signal peptide. The Extracellular portion of the chain corresponds to 40 to 665 (RVPRSVPRTS…GPSNRAHTVV (626 aa)). In terms of domain architecture, Sema spans 47–515 (RTSLPISEAD…SHTEVTQVNT (469 aa)). Asn69 carries N-linked (GlcNAc...) asparagine glycosylation. Cys117 and Cys127 are oxidised to a cystine. Asn138 carries N-linked (GlcNAc...) asparagine glycosylation. Intrachain disulfides connect Cys145-Cys154, Cys278-Cys389, and Cys302-Cys348. A glycan (N-linked (GlcNAc...) asparagine) is linked at Asn514. In terms of domain architecture, PSI spans 517–568 (NCGRLQSCSECILAQDPVCAWSFRLDACVAHAGEHRGMVQDIESADVSSLCP). 3 cysteine pairs are disulfide-bonded: Cys518/Cys535, Cys527/Cys544, and Cys592/Cys633. An Ig-like C2-type domain is found at 585-640 (VGHVVLPCSPSSAWASCVWHQPSGVTALTPRRDGLEVVVTPGAMGAYACECQEGGA). A helical transmembrane segment spans residues 666–686 (GAGLVGFLLGVLAASLTLLLI). Topologically, residues 687–776 (GRRQQRRRQR…PLATCDETSI (90 aa)) are cytoplasmic. The interval 702 to 741 (DKVGLDLGAPPSGTTSYSQDPPSPSPEDERLPLALGKRGS) is disordered. Ser724 and Ser726 each carry phosphoserine. The PDZ-binding signature appears at 774 to 776 (TSI).

The protein belongs to the semaphorin family. As to quaternary structure, interacts (via PDZ-binding motif) with DLG4/SAP90 (via PDZ domain 2); this interaction may promote translocation of DLG4/SAP90 to the membrane. In terms of tissue distribution, expressed at low levels in the developing embryo. Expressed at high levels in the lung and adult central nervous system, including the dorsal root ganglia.

The protein localises to the cell membrane. The protein resides in the postsynaptic density. It is found in the perikaryon. It localises to the cell projection. Its subcellular location is the dendrite. Its function is as follows. Probable cell surface receptor that regulates oligodendroglial precursor cell migration. Might also regulate differentiation of oligodendroglial precursor cells. Has growth cone collapse activity against retinal ganglion-cell axons. The polypeptide is Semaphorin-4F (Sema4f) (Rattus norvegicus (Rat)).